The primary structure comprises 451 residues: D-aminoacyl-tRNA deacylase (451 aa).

Residues 410-437 (RTADIPEGPKFGKLASGESVEIDGEEID) form a disordered region.

It belongs to the DtdA deacylase family. Monomer. It depends on Zn(2+) as a cofactor.

It carries out the reaction a D-aminoacyl-tRNA + H2O = a tRNA + a D-alpha-amino acid + H(+). The catalysed reaction is glycyl-tRNA(Ala) + H2O = tRNA(Ala) + glycine + H(+). In terms of biological role, D-aminoacyl-tRNA deacylase with broad substrate specificity. By recycling D-aminoacyl-tRNA to D-amino acids and free tRNA molecules, this enzyme counteracts the toxicity associated with the formation of D-aminoacyl-tRNA entities in vivo. This Haloarcula marismortui (strain ATCC 43049 / DSM 3752 / JCM 8966 / VKM B-1809) (Halobacterium marismortui) protein is D-aminoacyl-tRNA deacylase.